Here is a 455-residue protein sequence, read N- to C-terminus: Phosphoglucosamine mutase (455 aa).

Ser-102 acts as the Phosphoserine intermediate in catalysis. Mg(2+) is bound by residues Ser-102, Asp-241, Asp-243, and Asp-245. Phosphoserine is present on Ser-102.

This sequence belongs to the phosphohexose mutase family. Requires Mg(2+) as cofactor. Post-translationally, activated by phosphorylation.

The catalysed reaction is alpha-D-glucosamine 1-phosphate = D-glucosamine 6-phosphate. Its function is as follows. Catalyzes the conversion of glucosamine-6-phosphate to glucosamine-1-phosphate. This Legionella pneumophila (strain Corby) protein is Phosphoglucosamine mutase.